The primary structure comprises 462 residues: Putative endoglucanase type B (462 aa).

An N-terminal signal peptide occupies residues 1 to 16; that stretch reads MAYKLILAAFAATALA. The CBM1 domain occupies 25–61; sequence CSNGVWAQCGGQNWSGTPCCTSGNKCVKLNDFYSQCQ. Intrachain disulfides connect cysteine 33-cysteine 50 and cysteine 44-cysteine 60. Residue asparagine 37 is glycosylated (N-linked (GlcNAc...) asparagine). Low complexity predominate over residues 64–100; sequence SAEPSSTAAGPSSTTATKTTATGGSSTTAGGSVTSAP. Residues 64–102 are disordered; the sequence is SAEPSSTAAGPSSTTATKTTATGGSSTTAGGSVTSAPPA. The linker stretch occupies residues 66–99; it reads EPSSTAAGPSSTTATKTTATGGSSTTAGGSVTSA. The catalytic stretch occupies residues 100–462; the sequence is PPAASDNPYA…LLDNANPSFL (363 aa). Aspartate 190 is an active-site residue. Cysteine 191 and cysteine 250 are joined by a disulfide. Asparagine 223 carries N-linked (GlcNAc...) asparagine glycosylation. Aspartate 236 (proton donor) is an active-site residue. N-linked (GlcNAc...) asparagine glycosylation is found at asparagine 272 and asparagine 317. Residues cysteine 383 and cysteine 430 are joined by a disulfide bond. Aspartate 416 acts as the Nucleophile in catalysis.

The protein belongs to the glycosyl hydrolase 6 (cellulase B) family.

The catalysed reaction is Endohydrolysis of (1-&gt;4)-beta-D-glucosidic linkages in cellulose, lichenin and cereal beta-D-glucans.. This is Putative endoglucanase type B from Fusarium oxysporum (Fusarium vascular wilt).